The chain runs to 101 residues: MSGFSQERLMQVLLAPQISEKATYVADKNEQVVFKVASTATKPEVKAAVELLFKVEVKSVQIANVKGKVKRFGKMTGRRKDWKKAFVCLKPGQEINFAAGE.

Belongs to the universal ribosomal protein uL23 family. In terms of assembly, part of the 50S ribosomal subunit. Contacts protein L29, and trigger factor when it is bound to the ribosome.

Its function is as follows. One of the early assembly proteins it binds 23S rRNA. One of the proteins that surrounds the polypeptide exit tunnel on the outside of the ribosome. Forms the main docking site for trigger factor binding to the ribosome. This is Large ribosomal subunit protein uL23 from Aromatoleum aromaticum (strain DSM 19018 / LMG 30748 / EbN1) (Azoarcus sp. (strain EbN1)).